We begin with the raw amino-acid sequence, 118 residues long: Large ribosomal subunit protein bL20 (118 aa).

The protein belongs to the bacterial ribosomal protein bL20 family.

Binds directly to 23S ribosomal RNA and is necessary for the in vitro assembly process of the 50S ribosomal subunit. It is not involved in the protein synthesizing functions of that subunit. This Salmonella arizonae (strain ATCC BAA-731 / CDC346-86 / RSK2980) protein is Large ribosomal subunit protein bL20.